The following is a 1336-amino-acid chain: DNA-directed RNA polymerase subunit beta' (1336 aa).

Zn(2+) contacts are provided by Cys60, Cys62, Cys75, and Cys78. 3 residues coordinate Mg(2+): Asp535, Asp537, and Asp539. The Zn(2+) site is built by Cys902, Cys984, Cys991, and Cys994.

It belongs to the RNA polymerase beta' chain family. In terms of assembly, the RNAP catalytic core consists of 2 alpha, 1 beta, 1 beta' and 1 omega subunit. When a sigma factor is associated with the core the holoenzyme is formed, which can initiate transcription. The cofactor is Mg(2+). Zn(2+) is required as a cofactor.

It carries out the reaction RNA(n) + a ribonucleoside 5'-triphosphate = RNA(n+1) + diphosphate. DNA-dependent RNA polymerase catalyzes the transcription of DNA into RNA using the four ribonucleoside triphosphates as substrates. The polypeptide is DNA-directed RNA polymerase subunit beta' (Corynebacterium diphtheriae (strain ATCC 700971 / NCTC 13129 / Biotype gravis)).